A 564-amino-acid polypeptide reads, in one-letter code: MFS-type transporter grgE (564 aa).

A compositionally biased stretch (basic and acidic residues) spans 1–10 (MAENQVDPKR). The tract at residues 1-52 (MAENQVDPKRNLPLYGAADESTSATDKEDEVENVRQNGSAPPIEEARESNEA) is disordered. N-linked (GlcNAc...) asparagine glycosylation is present at asparagine 37. A run of 7 helical transmembrane segments spans residues 60–80 (HGLS…IISL), 101–118 (KVSW…GFQT), 131–151 (TTFL…GVAP), 161–181 (AIAG…IAFS), 192–212 (GLVG…GGAF), 220–240 (WCFY…LIFF), and 262–282 (LVGV…LQYG). N-linked (GlcNAc...) asparagine glycosylation occurs at asparagine 289. The next 7 helical transmembrane spans lie at 293-313 (VIGL…WEYY), 329-349 (ALWA…ILLY), 368-388 (VRNL…GAFV), 392-412 (GIAT…TGLI), 425-445 (IGYQ…PMNI), 462-482 (IFLA…SAFV), and 531-551 (TFAI…FTPW).

This sequence belongs to the major facilitator superfamily.

The protein localises to the membrane. Its function is as follows. MFS-type transporter; part of the gene cluster that mediates the biosynthesis of gregatin A, a fungal polyketide featuring an alkylated furanone core. The protein is MFS-type transporter grgE of Penicillium sp.